The following is a 780-amino-acid chain: Pendrin (780 aa).

Topologically, residues 1–87 (MAARDRRSEP…YRVKEWLLSD (87 aa)) are cytoplasmic. The chain crosses the membrane as a helical span at residues 88 to 108 (IISGVSTGLVGTLQGMAYALL). A topological domain (extracellular) is located at residue Ala109. Residues 110–130 (AVPVQYGLYSAFFPILTYFVF) traverse the membrane as a helical segment. Over 131 to 135 (GTSRH) the chain is Cytoplasmic. Residues 136-156 (ISVGPFPVVSLMVGSVVLSMA) traverse the membrane as a helical segment. Residues 157-191 (PDDHFLVPSGNGSTLNTTTLDTGTRDAARVLLAST) are Extracellular-facing. The chain crosses the membrane as a helical span at residues 192–212 (LTLLVGIIQLVFGGLQIGFIV). At 213–218 (RYLADP) the chain is on the cytoplasmic side. Residues 219–239 (LVGGFTTAAAFQVLVSQLKIV) form a helical membrane-spanning segment. The Extracellular segment spans residues 240 to 263 (LNVSTKNYNGVLSIIYTLIEIFQN). The chain crosses the membrane as a helical span at residues 264-284 (IGDTNIADFIAGLLTIIVCMA). The Cytoplasmic segment spans residues 285–295 (VKELNDRFKHK). A helical membrane pass occupies residues 296–316 (IPVPIPIEVIVTIIATAISYG). The Extracellular segment spans residues 317–344 (ANLEANYNAGIVKSIPSGFLPPVLPSVG). Residues 345–365 (LFSDMLAASFSIAVVAYAIAV) form a helical membrane-spanning segment. Over 366 to 384 (SVGKVYATKHDYIIDGNQE) the chain is Cytoplasmic. A helical transmembrane segment spans residues 385–405 (FIAFGISNVFSGFFSCFVATT). Residues 406–421 (ALSRTAVQESTGGKTQ) are Extracellular-facing. A helical transmembrane segment spans residues 422–442 (VAGLISAVIVMVAIVALGKLL). At 443–448 (EPLQKS) the chain is on the cytoplasmic side. A helical membrane pass occupies residues 449–469 (VLAAVVIANLKGMFMQVCDVP). Topologically, residues 470–486 (RLWKQNKTDAVIWVFTC) are extracellular. Residues 487 to 507 (IMSIILGLDLGLLAGLLFGLL) form a helical membrane-spanning segment. Topologically, residues 508 to 780 (TVVLRVQFPS…QDEAMRRLAS (273 aa)) are cytoplasmic. One can recognise an STAS domain in the interval 535-729 (HYKNLEEPEG…LTVHDAILYL (195 aa)).

This sequence belongs to the SLC26A/SulP transporter (TC 2.A.53) family. As to expression, highly expressed in the kidney (at protein level).

The protein localises to the cell membrane. Its subcellular location is the apical cell membrane. It carries out the reaction chloride(in) = chloride(out). It catalyses the reaction iodide(out) = iodide(in). The catalysed reaction is hydrogencarbonate(in) + chloride(out) = hydrogencarbonate(out) + chloride(in). The enzyme catalyses iodide(in) + hydrogencarbonate(out) = iodide(out) + hydrogencarbonate(in). It carries out the reaction iodide(in) + chloride(out) = iodide(out) + chloride(in). It catalyses the reaction formate(in) + chloride(out) = formate(out) + chloride(in). In terms of biological role, sodium-independent transporter of chloride and iodide. Mediates electroneutral chloride-bicarbonate and chloride-formate exchange with 1:1 stoichiometry. Mediates electroneutral iodide-chloride and iodide-bicarbonate exchange. This chain is Pendrin (Slc26a4), found in Rattus norvegicus (Rat).